We begin with the raw amino-acid sequence, 357 residues long: Uroporphyrinogen decarboxylase (357 aa).

Residues 27-31, D77, Y154, S209, and H330 each bind substrate; that span reads RQAGR.

Belongs to the uroporphyrinogen decarboxylase family. Homodimer.

It localises to the cytoplasm. It catalyses the reaction uroporphyrinogen III + 4 H(+) = coproporphyrinogen III + 4 CO2. The protein operates within porphyrin-containing compound metabolism; protoporphyrin-IX biosynthesis; coproporphyrinogen-III from 5-aminolevulinate: step 4/4. Catalyzes the decarboxylation of four acetate groups of uroporphyrinogen-III to yield coproporphyrinogen-III. The chain is Uroporphyrinogen decarboxylase from Acinetobacter baumannii (strain ATCC 17978 / DSM 105126 / CIP 53.77 / LMG 1025 / NCDC KC755 / 5377).